The primary structure comprises 448 residues: Probable D-serine dehydratase (448 aa).

Residue Lys119 is modified to N6-(pyridoxal phosphate)lysine.

The protein belongs to the serine/threonine dehydratase family. DsdA subfamily. It depends on pyridoxal 5'-phosphate as a cofactor.

The catalysed reaction is D-serine = pyruvate + NH4(+). This is Probable D-serine dehydratase from Pseudomonas aeruginosa (strain ATCC 15692 / DSM 22644 / CIP 104116 / JCM 14847 / LMG 12228 / 1C / PRS 101 / PAO1).